The sequence spans 284 residues: Tropomyosin-1 (284 aa).

Disordered stretches follow at residues 1 to 26 (MDAI…DTCE) and 96 to 124 (EEDL…DENN). Residues 1–276 (MDAIKKKMQA…YKSLADEMDS (276 aa)) adopt a coiled-coil conformation. Positions 12-26 (KLEKDNAMDKADTCE) are enriched in basic and acidic residues. Residues 107-121 (GTAQQKLLEAQQSAD) are compositionally biased toward polar residues.

The protein belongs to the tropomyosin family. As to quaternary structure, homodimer.

Its function is as follows. Tropomyosin, in association with the troponin complex, plays a central role in the calcium dependent regulation of muscle contraction. The polypeptide is Tropomyosin-1 (Bombyx mori (Silk moth)).